Here is a 466-residue protein sequence, read N- to C-terminus: Vacuolar protein sorting-associated protein 30 (466 aa).

A disordered region spans residues 35-55 (SETNTDNSDNNKHNGENDRNI). Residues 43–53 (DNNKHNGENDR) are compositionally biased toward basic and acidic residues. A coiled-coil region spans residues 149 to 258 (DTLLEKLKEE…QMEHLSFIKD (110 aa)). The BARA stretch occupies residues 279-463 (LNIYNETFRI…LAFSTSRINK (185 aa)). Residues 439-464 (WTTACKFLLTNIKWLLAFSTSRINKA) are required for membrane-association, autophagic function during starvation and normal autophagosome morphology.

The protein belongs to the beclin family. In terms of assembly, component of the autophagy-specific VPS34 PI3-kinase complex I; and of the VPS34 PI3-kinase complex II.

The protein resides in the endosome membrane. It is found in the vacuole membrane. It localises to the preautophagosomal structure membrane. Required for cytoplasm to vacuole transport (Cvt), autophagy, nucleophagy, and mitophagy, as a part of the autophagy-specific VPS34 PI3-kinase complex I. This complex is essential to recruit the ATG8-phosphatidylinositol conjugate and the ATG12-ATG5 conjugate to the pre-autophagosomal structure. Also involved in endosome-to-Golgi retrograde transport as part of the VPS34 PI3-kinase complex II. The sequence is that of Vacuolar protein sorting-associated protein 30 from Kluyveromyces marxianus (strain DMKU3-1042 / BCC 29191 / NBRC 104275) (Yeast).